The primary structure comprises 739 residues: Phosphoribosylformylglycinamidine synthase subunit PurL (739 aa).

The active site involves His53. Positions 56 and 95 each coordinate ATP. Glu97 contributes to the Mg(2+) binding site. Residues 98-101 and Arg120 contribute to the substrate site; that span reads SHNH. The active-site Proton acceptor is His99. Position 121 (Asp121) interacts with Mg(2+). Gln244 serves as a coordination point for substrate. Asp274 lines the Mg(2+) pocket. 318–320 provides a ligand contact to substrate; sequence ESQ. The ATP site is built by Asp501 and Gly538. Asn539 contributes to the Mg(2+) binding site. Substrate is bound at residue Ser541.

Belongs to the FGAMS family. In terms of assembly, monomer. Part of the FGAM synthase complex composed of 1 PurL, 1 PurQ and 2 PurS subunits.

The protein localises to the cytoplasm. The enzyme catalyses N(2)-formyl-N(1)-(5-phospho-beta-D-ribosyl)glycinamide + L-glutamine + ATP + H2O = 2-formamido-N(1)-(5-O-phospho-beta-D-ribosyl)acetamidine + L-glutamate + ADP + phosphate + H(+). Its pathway is purine metabolism; IMP biosynthesis via de novo pathway; 5-amino-1-(5-phospho-D-ribosyl)imidazole from N(2)-formyl-N(1)-(5-phospho-D-ribosyl)glycinamide: step 1/2. Part of the phosphoribosylformylglycinamidine synthase complex involved in the purines biosynthetic pathway. Catalyzes the ATP-dependent conversion of formylglycinamide ribonucleotide (FGAR) and glutamine to yield formylglycinamidine ribonucleotide (FGAM) and glutamate. The FGAM synthase complex is composed of three subunits. PurQ produces an ammonia molecule by converting glutamine to glutamate. PurL transfers the ammonia molecule to FGAR to form FGAM in an ATP-dependent manner. PurS interacts with PurQ and PurL and is thought to assist in the transfer of the ammonia molecule from PurQ to PurL. The polypeptide is Phosphoribosylformylglycinamidine synthase subunit PurL (Listeria monocytogenes serotype 4a (strain HCC23)).